The following is a 399-amino-acid chain: Cell division protein FtsZ (399 aa).

GTP-binding positions include 18-22 (GGGVN), 105-107 (GTG), Glu136, Arg140, and Asp184. Residues 311-399 (GFDGGQPPSK…EELDVPDFLK (89 aa)) form a disordered region. The segment covering 388-399 (AAEELDVPDFLK) has biased composition (acidic residues).

It belongs to the FtsZ family. In terms of assembly, homodimer. Polymerizes to form a dynamic ring structure in a strictly GTP-dependent manner. Interacts directly with several other division proteins.

Its subcellular location is the cytoplasm. Functionally, essential cell division protein that forms a contractile ring structure (Z ring) at the future cell division site. The regulation of the ring assembly controls the timing and the location of cell division. One of the functions of the FtsZ ring is to recruit other cell division proteins to the septum to produce a new cell wall between the dividing cells. Binds GTP and shows GTPase activity. The polypeptide is Cell division protein FtsZ (Streptomyces coelicolor (strain ATCC BAA-471 / A3(2) / M145)).